We begin with the raw amino-acid sequence, 500 residues long: Aspartyl/glutamyl-tRNA(Asn/Gln) amidotransferase subunit B (500 aa).

Belongs to the GatB/GatE family. GatB subfamily. As to quaternary structure, heterotrimer of A, B and C subunits.

It carries out the reaction L-glutamyl-tRNA(Gln) + L-glutamine + ATP + H2O = L-glutaminyl-tRNA(Gln) + L-glutamate + ADP + phosphate + H(+). The enzyme catalyses L-aspartyl-tRNA(Asn) + L-glutamine + ATP + H2O = L-asparaginyl-tRNA(Asn) + L-glutamate + ADP + phosphate + 2 H(+). Its function is as follows. Allows the formation of correctly charged Asn-tRNA(Asn) or Gln-tRNA(Gln) through the transamidation of misacylated Asp-tRNA(Asn) or Glu-tRNA(Gln) in organisms which lack either or both of asparaginyl-tRNA or glutaminyl-tRNA synthetases. The reaction takes place in the presence of glutamine and ATP through an activated phospho-Asp-tRNA(Asn) or phospho-Glu-tRNA(Gln). This is Aspartyl/glutamyl-tRNA(Asn/Gln) amidotransferase subunit B from Brucella anthropi (strain ATCC 49188 / DSM 6882 / CCUG 24695 / JCM 21032 / LMG 3331 / NBRC 15819 / NCTC 12168 / Alc 37) (Ochrobactrum anthropi).